The primary structure comprises 383 residues: 8-amino-7-oxononanoate synthase (383 aa).

Residue arginine 23 participates in substrate binding. Position 110–111 (110–111 (GF)) interacts with pyridoxal 5'-phosphate. Histidine 135 contributes to the substrate binding site. Residues serine 181, histidine 209, and threonine 235 each contribute to the pyridoxal 5'-phosphate site. The residue at position 238 (lysine 238) is an N6-(pyridoxal phosphate)lysine. Threonine 351 lines the substrate pocket.

This sequence belongs to the class-II pyridoxal-phosphate-dependent aminotransferase family. BioF subfamily. In terms of assembly, homodimer. Pyridoxal 5'-phosphate serves as cofactor.

It carries out the reaction 6-carboxyhexanoyl-[ACP] + L-alanine + H(+) = (8S)-8-amino-7-oxononanoate + holo-[ACP] + CO2. It participates in cofactor biosynthesis; biotin biosynthesis. Functionally, catalyzes the decarboxylative condensation of pimeloyl-[acyl-carrier protein] and L-alanine to produce 8-amino-7-oxononanoate (AON), [acyl-carrier protein], and carbon dioxide. This Aliivibrio salmonicida (strain LFI1238) (Vibrio salmonicida (strain LFI1238)) protein is 8-amino-7-oxononanoate synthase.